The chain runs to 104 residues: Co-chaperonin GroES 2 (104 aa).

Belongs to the GroES chaperonin family. Heptamer of 7 subunits arranged in a ring. Interacts with the chaperonin GroEL.

Its subcellular location is the cytoplasm. Its function is as follows. Together with the chaperonin GroEL, plays an essential role in assisting protein folding. The GroEL-GroES system forms a nano-cage that allows encapsulation of the non-native substrate proteins and provides a physical environment optimized to promote and accelerate protein folding. GroES binds to the apical surface of the GroEL ring, thereby capping the opening of the GroEL channel. This Rhodopseudomonas palustris (strain ATCC BAA-98 / CGA009) protein is Co-chaperonin GroES 2.